The sequence spans 849 residues: Putative pentatricopeptide repeat-containing protein At5g08490 (849 aa).

PPR repeat units lie at residues 20–54 (DHRV…GHIA), 55–89 (CSEV…DPVV), 121–155 (SSVT…GLEK), 156–187 (DTLV…IADK), 188–222 (DVVS…PTEP), 223–260 (NYAT…SWLQ), 262–296 (HVFV…DLVS), 297–327 (WNVV…GDVS), 329–363 (DSVT…SYLL), 365–399 (DTSV…DIIS), 400–430 (WNAI…AITL), 431–465 (DSVT…GLLH), 469–499 (EPKL…LSER), 501–531 (TLVS…MSTT), 532–566 (DLTT…GMRP), 567–597 (NTVT…IIRG), 601–631 (DIRL…DARR), 632–666 (DLVM…NIKP), 667–702 (DHVF…GMKP), and 703–733 (TMEQ…MPVE). Residues 738–813 (IWGTLLRACT…PAGCSWLEVD (76 aa)) are type E motif. The segment at 814 to 844 (GQRNVFVSGDCSHPRRDSIFDLVNALYLQMK) is type E(+) motif.

This sequence belongs to the PPR family. PCMP-E subfamily.

The protein is Putative pentatricopeptide repeat-containing protein At5g08490 (PCMP-E32) of Arabidopsis thaliana (Mouse-ear cress).